Consider the following 102-residue polypeptide: Biotrophy-associated secreted protein 4 (102 aa).

The first 21 residues, 1 to 21 (MQLSFSAIAILLAFAVNHATA), serve as a signal peptide directing secretion. N-linked (GlcNAc...) asparagine glycosylation occurs at asparagine 36.

The protein resides in the secreted. Secreted effector involved in biotrophic colonization of plant cells. Participates in transition from the biotrophic to the necrotrophic phase of Magnaporthe oryzae. Elicits rice basic defense responses during the early stage of interaction and promotes cell death in the late stage of compatible interaction. This chain is Biotrophy-associated secreted protein 4, found in Pyricularia oryzae (strain 70-15 / ATCC MYA-4617 / FGSC 8958) (Rice blast fungus).